A 321-amino-acid polypeptide reads, in one-letter code: Polyamine aminopropyltransferase (321 aa).

The PABS domain occupies histidine 23–aspartate 256. S-methyl-5'-thioadenosine is bound at residue glutamine 53. Histidine 84 and aspartate 108 together coordinate spermidine. Residues glutamate 127 and aspartate 159–glycine 160 each bind S-methyl-5'-thioadenosine. Catalysis depends on aspartate 177, which acts as the Proton acceptor.

This sequence belongs to the spermidine/spermine synthase family. In terms of assembly, homodimer or homotetramer.

It localises to the cytoplasm. It catalyses the reaction S-adenosyl 3-(methylsulfanyl)propylamine + putrescine = S-methyl-5'-thioadenosine + spermidine + H(+). It participates in amine and polyamine biosynthesis; spermidine biosynthesis; spermidine from putrescine: step 1/1. In terms of biological role, catalyzes the irreversible transfer of a propylamine group from the amino donor S-adenosylmethioninamine (decarboxy-AdoMet) to putrescine (1,4-diaminobutane) to yield spermidine. The polypeptide is Polyamine aminopropyltransferase (Korarchaeum cryptofilum (strain OPF8)).